The following is a 377-amino-acid chain: MSNRIQTLKEAKRIVVKIGSAVLTTAEGINLGLICRLADQLATLHERGVDIVLVSSGAVAAGRNSIPSGAKLDDLPARQAASAIGQSRLMHEYDETFRRFGLVTSQVLLTRDDLKHRDRFLNARNTLSRLLEWRVIPIINENDTVAVQELEFGDNDTLASLILNVVEADLFINLTSADGVFDKNPDKNPDAKPLACIENIHDLDLDAMCDGKTAVGSGGMFSKMRAANRAAQLGVPTLILAGKDRMIIERIFNGEERGTWIVPDEKSVSRRKYWLAYHCDPAGDLVIDDGAQKALLSGGKSLLPAGIIEVDGKFKAGELVRVVNKEGKSLAVGLSCYNSTDIIKIMGCKSCEIESILGKCPYPEAIHRDNLLLDAAL.

ATP is bound at residue lysine 17. Residues serine 56, aspartate 143, and asparagine 155 each contribute to the substrate site. An ATP-binding site is contributed by 217 to 223; it reads SGGMFSK. The region spanning 282–360 is the PUA domain; the sequence is AGDLVIDDGA…CEIESILGKC (79 aa).

Belongs to the glutamate 5-kinase family.

The protein resides in the cytoplasm. The catalysed reaction is L-glutamate + ATP = L-glutamyl 5-phosphate + ADP. It participates in amino-acid biosynthesis; L-proline biosynthesis; L-glutamate 5-semialdehyde from L-glutamate: step 1/2. Its function is as follows. Catalyzes the transfer of a phosphate group to glutamate to form L-glutamate 5-phosphate. The sequence is that of Glutamate 5-kinase from Maridesulfovibrio salexigens (strain ATCC 14822 / DSM 2638 / NCIMB 8403 / VKM B-1763) (Desulfovibrio salexigens).